Consider the following 614-residue polypeptide: Vitamin B12 transporter BtuB (614 aa).

Positions 1–20 (MIKKATLLTAFSVTAFSAWA) are cleaved as a signal peptide. A TonB box motif is present at residues 26-33 (DTLVVTAN). The 115-residue stretch at 38-152 (PRSAVLAPVT…IGGVVNIITT (115 aa)) folds into the TBDR plug domain. Cyanocob(III)alamin-binding positions include Ser85, Asn92, and 110-111 (VS). One can recognise a TBDR beta-barrel domain in the interval 155–614 (NPGTELTAGW…EYTLSGSYTF (460 aa)). 3 beta stranded membrane passes run 158 to 165 (TELTAGWG), 169 to 178 (YQNYDISTQQ), and 184 to 195 (TRATLIGDYEYT). Ca(2+) contacts are provided by Asp199, Gln211, Asp213, and Asp215. The next 2 beta stranded transmembrane spans lie at 217–227 (FLSKTLYGALE) and 232–248 (DRWSGFVRGYGYDNRTD). Residues Tyr249 and Asp250 each coordinate Ca(2+). Ala251 contacts cyanocob(III)alamin. Asp261 lines the Ca(2+) pocket. Transmembrane regions (beta stranded) follow at residues 263-277 (RKLYSQSWDAGLRFN), 279-296 (ERIQSQLVSSYSHSKDYN), 309-325 (TLDEMKQYNVQWTNSVV), 328-337 (HGNVGAGVDW), 353-369 (YDQRNTGVYLTGLQQLG), 371-381 (FTLEAAARSDD), 385-400 (FGRHGTWQTSAGWEFI), 403-417 (YRFIASYGTSYKAPN), 434-443 (KSKQWEGAFE), 449-458 (VSWRISGYRN), 473-490 (YYNEGKARIKGIEATANF), 494-509 (PLTHTVSYDYVDARNA), 517-529 (RRSKQMAKYQLDW), and 535-550 (DWGVTYQYLGSRYDSD). Cyanocob(III)alamin is bound at residue Thr309. Arg517 lines the cyanocob(III)alamin pocket. A cyanocob(III)alamin-binding site is contributed by Tyr551. The next 3 membrane-spanning stretches (beta stranded) occupy residues 558–572 (TVKMGGVSLWDLTVA), 585–596 (IANLFDKDYETV), and 602–614 (AGREYTLSGSYTF). Residues 597–614 (YGYQTAGREYTLSGSYTF) carry the TonB C-terminal box motif.

This sequence belongs to the TonB-dependent receptor family. BtuB (TC 1.B.14.3.1) subfamily.

Its subcellular location is the cell outer membrane. In terms of biological role, involved in the active translocation of vitamin B12 (cyanocobalamin) across the outer membrane to the periplasmic space. It derives its energy for transport by interacting with the trans-periplasmic membrane protein TonB. This chain is Vitamin B12 transporter BtuB, found in Salmonella choleraesuis (strain SC-B67).